Reading from the N-terminus, the 424-residue chain is Histidine--tRNA ligase (424 aa).

The protein belongs to the class-II aminoacyl-tRNA synthetase family. As to quaternary structure, homodimer.

The protein resides in the cytoplasm. The catalysed reaction is tRNA(His) + L-histidine + ATP = L-histidyl-tRNA(His) + AMP + diphosphate + H(+). The sequence is that of Histidine--tRNA ligase from Shewanella sediminis (strain HAW-EB3).